The primary structure comprises 297 residues: Counting factor 45-1 (297 aa).

The signal sequence occupies residues 1–20 (MNKLISLLLVCLVAIALVNA). Residues 24-235 (IDFDSDTVNS…SASTGSGSGS (212 aa)) form the Ch-type lysozyme domain. Active-site residues include aspartate 29, aspartate 119, and glutamate 121. An N-linked (GlcNAc...) asparagine glycan is attached at asparagine 166. The tract at residues 231–296 (SGSGSSSGSS…GSSSGSGSGS (66 aa)) is S-G-S motif repeats. Residues 231 to 297 (SGSGSSSGSS…SSSGSGSGSS (67 aa)) form a disordered region. Over residues 234 to 275 (GSSSGSSSGSSSGSSSGSGSSSGSGSSSGSSSGSGSGSSSSG) the composition is skewed to low complexity. Residues 276-297 (SGSGSGSSSGSGSSSGSGSGSS) are compositionally biased toward gly residues.

Belongs to the glycosyl hydrolase 25 family. In terms of assembly, monomer. Component of the counting factor (CF) complex, which includes cf60, cf50, cf45-1 and ctnA.

The protein localises to the secreted. In terms of biological role, cell-counting factor that limits the maximum size of the multicellular structure during aggregation. In Dictyostelium discoideum (Social amoeba), this protein is Counting factor 45-1 (cf45-1).